We begin with the raw amino-acid sequence, 162 residues long: Cyanate hydratase (162 aa).

Residues arginine 103, glutamate 106, and serine 129 contribute to the active site.

It belongs to the cyanase family.

It catalyses the reaction cyanate + hydrogencarbonate + 3 H(+) = NH4(+) + 2 CO2. In terms of biological role, catalyzes the reaction of cyanate with bicarbonate to produce ammonia and carbon dioxide. This Pyrenophora tritici-repentis (strain Pt-1C-BFP) (Wheat tan spot fungus) protein is Cyanate hydratase.